The chain runs to 247 residues: DNA polymerase sliding clamp 1 (247 aa).

This sequence belongs to the PCNA family. Homotrimer. The subunits circularize to form a toroid; DNA passes through its center. Replication factor C (RFC) is required to load the toroid on the DNA.

In terms of biological role, sliding clamp subunit that acts as a moving platform for DNA processing. Responsible for tethering the catalytic subunit of DNA polymerase and other proteins to DNA during high-speed replication. The chain is DNA polymerase sliding clamp 1 from Sulfolobus acidocaldarius (strain ATCC 33909 / DSM 639 / JCM 8929 / NBRC 15157 / NCIMB 11770).